Consider the following 360-residue polypeptide: MRKRISAIINKLNISIMMMIVVLMIGCGQQAVEAGKDGARAATGGRSLSEVLMEVGKSAENAFYSFMALVSDTLGLRVTKDTKKNEVGGYFNSLGGKLGKASDELEEVAKKSEVEGAKDGPIAVAIRAAVDTAKTTLSTLKGHLESLKGIGDDKVVGWAENDQQGIKPADDGLNKFLNALQSIVKAATDAGVLAPKAGNTTLTVNGVDNKDGAKVLAIDKPGAAVGEKASLIVSAVSGEEILASIVASKEGDQALGAAADGTTTAMSFAKGGTKDNLSNANTPKAAAVAGGIALRSLVKDGKLASHNDNSEKAVQAAGVIAANKLLVSVEDLIKKTVKNVLEKAKEKIDKARAPKATGQQ.

Residues 1–26 (MRKRISAIINKLNISIMMMIVVLMIG) form the signal peptide. A lipid anchor (N-palmitoyl cysteine) is attached at cysteine 27. Cysteine 27 is lipidated: S-diacylglycerol cysteine.

Belongs to the variable large protein (Vlp) family. Alpha subfamily.

It is found in the cell outer membrane. Functionally, the Vlp and Vsp proteins are antigenically distinct proteins, only one vlp or vsp gene is transcriptionally active at any one time. Switching between these genes is a mechanism of host immune response evasion. The sequence is that of Variable large protein 18 from Borrelia hermsii.